The primary structure comprises 205 residues: Large ribosomal subunit protein uL3c (205 aa).

Residues 129–154 (SRGPMSHGSKNHRQPGSIGAGTTPGR) form a disordered region.

This sequence belongs to the universal ribosomal protein uL3 family. Part of the 50S ribosomal subunit.

It is found in the plastid. The protein resides in the chloroplast. One of the primary rRNA binding proteins, it binds directly near the 3'-end of the 23S rRNA, where it nucleates assembly of the 50S subunit. This is Large ribosomal subunit protein uL3c (rpl3) from Pyropia yezoensis (Susabi-nori).